The primary structure comprises 969 residues: Leucine--tRNA ligase (969 aa).

The 'HIGH' region motif lies at 45-55; sequence PYTNAPLHIGH. Residues 649 to 653 carry the 'KMSKS' region motif; sequence KMSKS. Lys652 contributes to the ATP binding site.

This sequence belongs to the class-I aminoacyl-tRNA synthetase family.

The protein localises to the cytoplasm. The catalysed reaction is tRNA(Leu) + L-leucine + ATP = L-leucyl-tRNA(Leu) + AMP + diphosphate. The sequence is that of Leucine--tRNA ligase from Staphylothermus marinus (strain ATCC 43588 / DSM 3639 / JCM 9404 / F1).